A 396-amino-acid chain; its full sequence is L-lactate dehydrogenase (396 aa).

Residues 1–380 (MIISAASDYR…TQDSLVQELS (380 aa)) form the FMN hydroxy acid dehydrogenase domain. Tyr24 provides a ligand contact to substrate. Residues Ser106 and Gln127 each contribute to the FMN site. Residue Tyr129 coordinates substrate. Residue Thr155 coordinates FMN. Residue Arg164 participates in substrate binding. Lys251 provides a ligand contact to FMN. His275 functions as the Proton acceptor in the catalytic mechanism. Arg278 lines the substrate pocket. Position 306-330 (306-330 (DSGIRNGLDVVRMIALGADTVLLGR)) interacts with FMN.

The protein belongs to the FMN-dependent alpha-hydroxy acid dehydrogenase family. It depends on FMN as a cofactor.

It is found in the cell inner membrane. It catalyses the reaction (S)-lactate + A = pyruvate + AH2. Its function is as follows. Catalyzes the conversion of L-lactate to pyruvate. Is coupled to the respiratory chain. The sequence is that of L-lactate dehydrogenase from Escherichia coli (strain SMS-3-5 / SECEC).